The sequence spans 193 residues: Phosphoheptose isomerase (193 aa).

One can recognise an SIS domain in the interval 37 to 193 (LADSFKAGGK…MLIEKEMAKG (157 aa)). 52-54 (NGG) is a binding site for substrate. Zn(2+) contacts are provided by His61 and Glu65. Substrate contacts are provided by residues Glu65, 93 to 94 (ND), 119 to 121 (STS), Ser124, and Gln172. 2 residues coordinate Zn(2+): Gln172 and His180.

This sequence belongs to the SIS family. GmhA subfamily. As to quaternary structure, homotetramer. Zn(2+) is required as a cofactor.

It localises to the cytoplasm. It carries out the reaction 2 D-sedoheptulose 7-phosphate = D-glycero-alpha-D-manno-heptose 7-phosphate + D-glycero-beta-D-manno-heptose 7-phosphate. Its pathway is carbohydrate biosynthesis; D-glycero-D-manno-heptose 7-phosphate biosynthesis; D-glycero-alpha-D-manno-heptose 7-phosphate and D-glycero-beta-D-manno-heptose 7-phosphate from sedoheptulose 7-phosphate: step 1/1. Its function is as follows. Catalyzes the isomerization of sedoheptulose 7-phosphate in D-glycero-D-manno-heptose 7-phosphate. This is Phosphoheptose isomerase from Klebsiella pneumoniae subsp. pneumoniae (strain ATCC 700721 / MGH 78578).